The following is a 389-amino-acid chain: MEKAIRNFLSQESAGGILLLIAVAFAMLMANSPLAGFYQGFLGTEVQVRVGALDLHKPLLLWINDGLMALFFLLIGLEVKRELLEGALSSVAQASLPTFAAIGGMLVPAGIYLLFNYGDPITQAGWAIPAATDIAFALGIMALLGSRVPVALKVFLLALAIIDDLGVIVIIALFYSSDLSTVSLIIASIAIVGLVALNRKGVTSLAPYGVLGLILWVAVLKSGVHATLAGVIIAFCIPLRAKDGSSPSEHLEHSLHPWSTFLILPVFAFANAGVALGNMSLDTLMSPVPVGIALGLMLGKPIGVMLFSFVAVKLKLAQLPDGIGWKQIAPVAAMCGIGFTMSMFIASLAFEQADPMFGDLARLGTLMGSIFAALIGYFWLSKVLPKKGV.

11 helical membrane-spanning segments follow: residues 17–37 (ILLLIAVAFAMLMANSPLAGF), 59–79 (LLLWINDGLMALFFLLIGLEV), 95–115 (SLPTFAAIGGMLVPAGIYLLF), 124–144 (AGWAIPAATDIAFALGIMALL), 154–174 (VFLLALAIIDDLGVIVIIALF), 177–197 (SDLSTVSLIIASIAIVGLVAL), 213–233 (LILWVAVLKSGVHATLAGVII), 261–281 (FLILPVFAFANAGVALGNMSL), 292–312 (IALGLMLGKPIGVMLFSFVAV), 328–348 (IAPVAAMCGIGFTMSMFIASL), and 363–383 (LGTLMGSIFAALIGYFWLSKV).

Belongs to the NhaA Na(+)/H(+) (TC 2.A.33) antiporter family.

The protein resides in the cell inner membrane. The catalysed reaction is Na(+)(in) + 2 H(+)(out) = Na(+)(out) + 2 H(+)(in). In terms of biological role, na(+)/H(+) antiporter that extrudes sodium in exchange for external protons. This Shewanella oneidensis (strain ATCC 700550 / JCM 31522 / CIP 106686 / LMG 19005 / NCIMB 14063 / MR-1) protein is Na(+)/H(+) antiporter NhaA.